Reading from the N-terminus, the 948-residue chain is Bifunctional glutamine synthetase adenylyltransferase/adenylyl-removing enzyme (948 aa).

An adenylyl removase region spans residues 1–445 (MAPPPDTSGS…IFTEVIAEPP (445 aa)). The interval 451–948 (EPLLDGGEAE…WKQIIEAPVF (498 aa)) is adenylyl transferase.

The protein belongs to the GlnE family. It depends on Mg(2+) as a cofactor.

It carries out the reaction [glutamine synthetase]-O(4)-(5'-adenylyl)-L-tyrosine + phosphate = [glutamine synthetase]-L-tyrosine + ADP. It catalyses the reaction [glutamine synthetase]-L-tyrosine + ATP = [glutamine synthetase]-O(4)-(5'-adenylyl)-L-tyrosine + diphosphate. Involved in the regulation of glutamine synthetase GlnA, a key enzyme in the process to assimilate ammonia. When cellular nitrogen levels are high, the C-terminal adenylyl transferase (AT) inactivates GlnA by covalent transfer of an adenylyl group from ATP to specific tyrosine residue of GlnA, thus reducing its activity. Conversely, when nitrogen levels are low, the N-terminal adenylyl removase (AR) activates GlnA by removing the adenylyl group by phosphorolysis, increasing its activity. The regulatory region of GlnE binds the signal transduction protein PII (GlnB) which indicates the nitrogen status of the cell. In Methylococcus capsulatus (strain ATCC 33009 / NCIMB 11132 / Bath), this protein is Bifunctional glutamine synthetase adenylyltransferase/adenylyl-removing enzyme.